The primary structure comprises 179 residues: Adaptation to cold protein A (179 aa).

The tract at residues Lys133–Arg179 is disordered. The span at Asp144–Arg179 shows a compositional bias: acidic residues.

Functionally, part of an operon involved in cold adaptation. This chain is Adaptation to cold protein A, found in Shewanella oneidensis (strain ATCC 700550 / JCM 31522 / CIP 106686 / LMG 19005 / NCIMB 14063 / MR-1).